The sequence spans 520 residues: 2-isopropylmalate synthase (520 aa).

The region spanning 5-267 is the Pyruvate carboxyltransferase domain; the sequence is VIIFDTTLRD…YTNINHQEIY (263 aa). Mn(2+) is bound by residues Asp-14, His-202, His-204, and Asn-238. A regulatory domain region spans residues 392–520; the sequence is HLDNFNIQSG…RIQQNTKEMV (129 aa).

Belongs to the alpha-IPM synthase/homocitrate synthase family. LeuA type 1 subfamily. In terms of assembly, homodimer. The cofactor is Mn(2+).

The protein resides in the cytoplasm. It catalyses the reaction 3-methyl-2-oxobutanoate + acetyl-CoA + H2O = (2S)-2-isopropylmalate + CoA + H(+). It functions in the pathway amino-acid biosynthesis; L-leucine biosynthesis; L-leucine from 3-methyl-2-oxobutanoate: step 1/4. Catalyzes the condensation of the acetyl group of acetyl-CoA with 3-methyl-2-oxobutanoate (2-ketoisovalerate) to form 3-carboxy-3-hydroxy-4-methylpentanoate (2-isopropylmalate). This is 2-isopropylmalate synthase from Photorhabdus laumondii subsp. laumondii (strain DSM 15139 / CIP 105565 / TT01) (Photorhabdus luminescens subsp. laumondii).